The following is a 247-amino-acid chain: HTH-type transcriptional regulator SarU (247 aa).

DNA-binding regions (H-T-H motif) lie at residues 53 to 76 (LKEI…SLSK) and 178 to 201 (LKDL…RLNN).

It belongs to the SarA family.

Its subcellular location is the cytoplasm. In terms of biological role, positive regulator of RNAII and RNAIII in a cell density-dependent manner. It can contribute to the expression of virulence genes controlled by agr. May also regulate target genes via an agr-independent pathway. The sequence is that of HTH-type transcriptional regulator SarU (sarU) from Staphylococcus aureus (strain COL).